The chain runs to 130 residues: uncharacterized protein (130 aa).

Residues 85–116 (NDSDDDCSENDSDGDCSENDSDNDYSENESDC) form a disordered region.

This sequence belongs to the mimivirus L5 family.

This is an uncharacterized protein from Acanthamoeba polyphaga mimivirus (APMV).